Reading from the N-terminus, the 276-residue chain is WIMGHMVNKIEQINEFLDLGANSIEVDITFDNLGYAEYTYHGFPCDCKRWCTNQENVKEYLNALSDITTPGNPKFRKELTLVVFDLKTGGIDANRMYEGGKDFAGKILFDYWKGSENAGRAYIIISVPSIDHYKFMKGFRERFDGSAFKDLLLEKDGWDFSGNDDLDATRTAYQNAGIEALNHIWQSDGITNCIPRGLGRVNKAVSNRDSPDAFINKVYVWTVEKYSSVKDALNADVDGIMTNHPNVINGVLKEDEFKDRFKLATYGDNPWTKFKR.

Residue His5 is part of the active site. The Mg(2+) site is built by Glu25 and Asp27. The Nucleophile role is filled by His41. 2 disulfide bridges follow: Cys45–Cys51 and Cys47–Cys193. Asp85 serves as a coordination point for Mg(2+).

The protein belongs to the arthropod phospholipase D family. Class II subfamily. Mg(2+) serves as cofactor. As to expression, expressed by the venom gland.

Its subcellular location is the secreted. It catalyses the reaction an N-(acyl)-sphingosylphosphocholine = an N-(acyl)-sphingosyl-1,3-cyclic phosphate + choline. The catalysed reaction is an N-(acyl)-sphingosylphosphoethanolamine = an N-(acyl)-sphingosyl-1,3-cyclic phosphate + ethanolamine. It carries out the reaction a 1-acyl-sn-glycero-3-phosphocholine = a 1-acyl-sn-glycero-2,3-cyclic phosphate + choline. The enzyme catalyses a 1-acyl-sn-glycero-3-phosphoethanolamine = a 1-acyl-sn-glycero-2,3-cyclic phosphate + ethanolamine. Functionally, dermonecrotic toxins cleave the phosphodiester linkage between the phosphate and headgroup of certain phospholipids (sphingolipid and lysolipid substrates), forming an alcohol (often choline) and a cyclic phosphate. This toxin acts on sphingomyelin (SM). It may also act on ceramide phosphoethanolamine (CPE), lysophosphatidylcholine (LPC) and lysophosphatidylethanolamine (LPE), but not on lysophosphatidylserine (LPS), and lysophosphatidylglycerol (LPG). It acts by transphosphatidylation, releasing exclusively cyclic phosphate products as second products. Induces dermonecrosis, hemolysis, increased vascular permeability, edema, inflammatory response, and platelet aggregation. This chain is Dermonecrotic toxin LlSicTox-alphaIV1i, found in Loxosceles laeta (South American recluse spider).